An 846-amino-acid chain; its full sequence is MTQVTVKELAQEVEAPVERLLQQMREAGLPHTDAGQVVTDNEKQTLLTHLKSSHKSKAEEPRKITLQRKTTSTLRVAGSKSISVEVRKKKVFVQRSPEEIQAEQKRELEERRAAENAARDKVEAEVRQRNEEQARRQAAGSTAAAPAPAAKPEPAPAAAPVAAPAPVVADAPASEDAAARAAERKKDETRRNESRTRDDDRRRGEAPRVSIKVKVKEKEKAPTPRAAPRTTDEESDGARRGRGGKSKLKKRNQHGFQNPTGPVIRDVTIGETITVSELANQMSVKGAEVVKFMFKMGTPVTINQVLDQETAQLIAEELGHKVTLVSDTALEDSLAESLKFEGQTESRAPVVTVMGHVDHGKTSLLDYIRRAKVAAGEAGGITQHIGAYHVETDRGMVTFLDTPGHAAFTQMRARGAKATDIVILVVAADDGVMPQTREAVQHAKAAGVPLVVAVNKIDKPGADLDRIRNELSVEGVTSEDWGGDTPFVKVSAKMGTGVDELLEAVLLQAEILELTATPTAPGRGVVVESRLDKGRGPVATILVQDGTLRQGDMVLCGSNYGRVRAMLDENGKPVKEAGPSIPVEILGLDGTPEAGDELSVVADEKKAREVALFRQGKYREVKLARAHAGKLENIFETMGQEEKKTLNIVLKTDVRGSLEALQGSLGGLGNDEVQVRVIGGGVGGITESDANLALASNAVLFGFNVRADAGARKIVEQEGLDMRYYNVIYDIIEDVKKALTGMLGSDVRENILGVAEVRDVFRSPKFGAIAGCMVIEGTVYRNRPIRVLRDDVVIFEGELESLRRFKDDASEVRSGMECGIGVKSYNDVKVGDKIEVFEKVQVARTL.

Positions 94-263 are disordered; the sequence is QRSPEEIQAE…HGFQNPTGPV (170 aa). Basic and acidic residues predominate over residues 96 to 135; the sequence is SPEEIQAEQKRELEERRAAENAARDKVEAEVRQRNEEQAR. Low complexity-rich tracts occupy residues 136–148 and 158–176; these read RQAA…APAP and AAPV…ASED. 2 stretches are compositionally biased toward basic and acidic residues: residues 177-206 and 230-239; these read AAAR…RGEA and TTDEESDGAR. Basic residues predominate over residues 240-253; that stretch reads RGRGGKSKLKKRNQ. Residues 346 to 513 form the tr-type G domain; it reads SRAPVVTVMG…AVLLQAEILE (168 aa). The G1 stretch occupies residues 355 to 362; the sequence is GHVDHGKT. Residue 355-362 participates in GTP binding; sequence GHVDHGKT. Positions 380-384 are G2; sequence GITQH. The tract at residues 401 to 404 is G3; that stretch reads DTPG. GTP contacts are provided by residues 401–405 and 455–458; these read DTPGH and NKID. The interval 455–458 is G4; that stretch reads NKID. The segment at 491-493 is G5; it reads SAK.

This sequence belongs to the TRAFAC class translation factor GTPase superfamily. Classic translation factor GTPase family. IF-2 subfamily.

The protein localises to the cytoplasm. Functionally, one of the essential components for the initiation of protein synthesis. Protects formylmethionyl-tRNA from spontaneous hydrolysis and promotes its binding to the 30S ribosomal subunits. Also involved in the hydrolysis of GTP during the formation of the 70S ribosomal complex. This is Translation initiation factor IF-2 from Pseudomonas putida (strain ATCC 700007 / DSM 6899 / JCM 31910 / BCRC 17059 / LMG 24140 / F1).